The chain runs to 225 residues: Urease accessory protein UreE (225 aa).

A compositionally biased stretch (basic and acidic residues) spans 171 to 215 (HHGHEHSHDHEHGHSHAAHEHSHGHDHTHGHDHDHGDHVHDESCG). The disordered stretch occupies residues 171 to 225 (HHGHEHSHDHEHGHSHAAHEHSHGHDHTHGHDHDHGDHVHDESCGHGHHHHHAHR). The segment covering 216 to 225 (HGHHHHHAHR) has biased composition (basic residues).

The protein belongs to the UreE family.

It localises to the cytoplasm. Functionally, involved in urease metallocenter assembly. Binds nickel. Probably functions as a nickel donor during metallocenter assembly. This Paraburkholderia xenovorans (strain LB400) protein is Urease accessory protein UreE.